The chain runs to 301 residues: Bifunctional protein FolD (301 aa).

NADP(+) contacts are provided by residues 169–171, Ser-194, and Ile-235; that span reads GRS.

This sequence belongs to the tetrahydrofolate dehydrogenase/cyclohydrolase family. In terms of assembly, homodimer.

The catalysed reaction is (6R)-5,10-methylene-5,6,7,8-tetrahydrofolate + NADP(+) = (6R)-5,10-methenyltetrahydrofolate + NADPH. The enzyme catalyses (6R)-5,10-methenyltetrahydrofolate + H2O = (6R)-10-formyltetrahydrofolate + H(+). The protein operates within one-carbon metabolism; tetrahydrofolate interconversion. In terms of biological role, catalyzes the oxidation of 5,10-methylenetetrahydrofolate to 5,10-methenyltetrahydrofolate and then the hydrolysis of 5,10-methenyltetrahydrofolate to 10-formyltetrahydrofolate. In Gloeothece citriformis (strain PCC 7424) (Cyanothece sp. (strain PCC 7424)), this protein is Bifunctional protein FolD.